A 954-amino-acid chain; its full sequence is Glycine dehydrogenase (decarboxylating) (954 aa).

Lys704 is modified (N6-(pyridoxal phosphate)lysine).

Belongs to the GcvP family. The glycine cleavage system is composed of four proteins: P, T, L and H. Requires pyridoxal 5'-phosphate as cofactor.

The catalysed reaction is N(6)-[(R)-lipoyl]-L-lysyl-[glycine-cleavage complex H protein] + glycine + H(+) = N(6)-[(R)-S(8)-aminomethyldihydrolipoyl]-L-lysyl-[glycine-cleavage complex H protein] + CO2. The glycine cleavage system catalyzes the degradation of glycine. The P protein binds the alpha-amino group of glycine through its pyridoxal phosphate cofactor; CO(2) is released and the remaining methylamine moiety is then transferred to the lipoamide cofactor of the H protein. This is Glycine dehydrogenase (decarboxylating) from Rhizobium etli (strain ATCC 51251 / DSM 11541 / JCM 21823 / NBRC 15573 / CFN 42).